Here is a 1620-residue protein sequence, read N- to C-terminus: ABC-type organic anion transporter ABCA8B (1620 aa).

The next 7 helical transmembrane spans lie at 30–50 (SLMEWVSSLLLLLFLYWYPHG), 223–243 (FFIFTCIISFSPITYYVSINV), 267–287 (SWGLLYAGFVFIMALSLALVI), 298–318 (FMVVFSLFLLYGLSMITLAFL), 326–346 (SVLTGLSVFLLTIFWGSLGFT), 352–372 (LPAPVEWTLSLFSPFAFTLGM), and 396–416 (LIIATNFMLVFDAFLYLALMM). Residues 479-714 (IRIRNISKEY…WGVGYHLSLQ (236 aa)) form the ABC transporter 1 domain. Residue 515-522 (GHSGAGKS) participates in ATP binding. N723 carries an N-linked (GlcNAc...) asparagine glycan. 8 helical membrane passes run 860 to 880 (TLLSVLLILVVGICPFLFENI), 979 to 999 (CFPVLMDILSNGLLGMVKPSA), 1023 to 1043 (TAFWLILTSACPPYIAMSSVT), 1069 to 1089 (MVDIPLYCFVFLFMSLMDYLF), 1105 to 1125 (IPCSVGYAISLIFLTYVISFI), 1135 to 1155 (IWSLSFYIITVFSVAVILLAF), 1164 to 1184 (IIFLIPPSTLVGCLILSLHLF), and 1194 to 1214 (VIEPFLVFLIPFLHVFIFIFT). The 234-residue stretch at 1283–1516 (LRKEYAGKQK…FGKDYLLEMK (234 aa)) folds into the ABC transporter 2 domain. 1321 to 1328 (GHNGAGKS) provides a ligand contact to ATP.

This sequence belongs to the ABC transporter superfamily. ABCA family. Expressed in heart, brain, lung, liver and skeletal muscle. Highly expressed in the liver, and is also abundant in heart and skeletal muscle. Highly expressed in liver.

The protein resides in the cell membrane. It is found in the basolateral cell membrane. The catalysed reaction is taurocholate(in) + ATP + H2O = taurocholate(out) + ADP + phosphate + H(+). It carries out the reaction cholesterol(in) + ATP + H2O = cholesterol(out) + ADP + phosphate + H(+). Its activity is regulated as follows. Cholesterol efflux is increased by extracellularly applied taurocholate. Functionally, mediates cholesterol and taurocholate efflux. Through the interaction with ABCA1 potentiates the cholesterol efflux to lipid-free APOA1, in turn regulates high-density lipoprotein cholesterol levels. The chain is ABC-type organic anion transporter ABCA8B from Mus musculus (Mouse).